The sequence spans 62 residues: MARYRHSRSRSRSRYRRRRRRRSRYRSRRRXYRGRRRRRSRRGRRRRGYSRRRYSRRRRRRY.

Positions 1 to 62 are disordered; it reads MARYRHSRSR…RYSRRRRRRY (62 aa).

It belongs to the protamine P1 family. As to expression, testis.

It is found in the nucleus. Its subcellular location is the chromosome. In terms of biological role, protamines substitute for histones in the chromatin of sperm during the haploid phase of spermatogenesis. They compact sperm DNA into a highly condensed, stable and inactive complex. The protein is Sperm protamine P1 (PRM1) of Dorcopsulus vanheurni (Lesser forest wallaby).